We begin with the raw amino-acid sequence, 121 residues long: Cell division protein FtsB (121 aa).

The Cytoplasmic portion of the chain corresponds to 1–6 (MRNWRW). The chain crosses the membrane as a helical span at residues 7–24 (LLLVLAVLLAWLQYRFWF). Residues 25–121 (GPGNSGEVMM…PEPIDPVDHP (97 aa)) lie on the Periplasmic side of the membrane. Positions 31 to 66 (EVMMLEAQVAHQTQDNEGLRQRNQALAAEVKDLKDG) form a coiled coil. The segment at 92–121 (EDAPLPAPASPEAPAPPQQAPEPIDPVDHP) is disordered. A compositionally biased stretch (pro residues) spans 96–115 (LPAPASPEAPAPPQQAPEPI).

Belongs to the FtsB family. In terms of assembly, part of a complex composed of FtsB, FtsL and FtsQ.

It is found in the cell inner membrane. Functionally, essential cell division protein. May link together the upstream cell division proteins, which are predominantly cytoplasmic, with the downstream cell division proteins, which are predominantly periplasmic. The protein is Cell division protein FtsB of Xanthomonas euvesicatoria pv. vesicatoria (strain 85-10) (Xanthomonas campestris pv. vesicatoria).